The following is a 37-amino-acid chain: Hemocyanin subunit B (37 aa).

It belongs to the tyrosinase family. Hemocyanin subfamily. Hemolymph.

It localises to the secreted. Its subcellular location is the extracellular space. Hemocyanins are copper-containing oxygen carriers occurring freely dissolved in the hemolymph of many mollusks and arthropods. The chain is Hemocyanin subunit B from Cancer pagurus (Rock crab).